Reading from the N-terminus, the 473-residue chain is UDP-N-acetylmuramate--L-alanine ligase (473 aa).

122–128 is a binding site for ATP; sequence GTHGKTT.

The protein belongs to the MurCDEF family.

It localises to the cytoplasm. It carries out the reaction UDP-N-acetyl-alpha-D-muramate + L-alanine + ATP = UDP-N-acetyl-alpha-D-muramoyl-L-alanine + ADP + phosphate + H(+). The protein operates within cell wall biogenesis; peptidoglycan biosynthesis. Functionally, cell wall formation. The sequence is that of UDP-N-acetylmuramate--L-alanine ligase from Teredinibacter turnerae (strain ATCC 39867 / T7901).